We begin with the raw amino-acid sequence, 292 residues long: Ribosomal RNA small subunit methyltransferase A (292 aa).

Asparagine 28, leucine 30, glycine 55, glutamate 76, aspartate 101, and asparagine 126 together coordinate S-adenosyl-L-methionine.

The protein belongs to the class I-like SAM-binding methyltransferase superfamily. rRNA adenine N(6)-methyltransferase family. RsmA subfamily.

The protein localises to the cytoplasm. The enzyme catalyses adenosine(1518)/adenosine(1519) in 16S rRNA + 4 S-adenosyl-L-methionine = N(6)-dimethyladenosine(1518)/N(6)-dimethyladenosine(1519) in 16S rRNA + 4 S-adenosyl-L-homocysteine + 4 H(+). In terms of biological role, specifically dimethylates two adjacent adenosines (A1518 and A1519) in the loop of a conserved hairpin near the 3'-end of 16S rRNA in the 30S particle. May play a critical role in biogenesis of 30S subunits. The protein is Ribosomal RNA small subunit methyltransferase A of Bacillus anthracis.